A 290-amino-acid chain; its full sequence is Aquaporin PIP2-1 (290 aa).

Residues 1 to 20 (MGKDDVIESGAGGGEFAAKD) form a disordered region. 2 consecutive transmembrane segments (helical) span residues 43–63 (AVIAEFIATLLFLYITVATVI) and 80–100 (CGGVGVLGIAWAFGGMIFVLV). The short motif at 112 to 114 (NPA) is the NPA 1 element. Helical transmembrane passes span 131–151 (LLYIVAQCLGAICGVGLVKAF), 173–193 (GTGLGAEIIGTFVLVYTVFSA), and 205–225 (VPVLAPLPIGFAVFMVHLATI). The short motif at 233–235 (NPA) is the NPA 2 element. A helical membrane pass occupies residues 255 to 275 (IFWVGPLVGAAIAAFYHQYIL).

The protein belongs to the MIP/aquaporin (TC 1.A.8) family. PIP (TC 1.A.8.11) subfamily. Homomers. Can interact with PIP1-2 to form heteromers. As to expression, expressed in roots.

The protein resides in the cell membrane. Water channel required to facilitate the transport of water across cell membrane. Active as homomers. Increased activity when heteromerization with PIP1-2. This chain is Aquaporin PIP2-1 (PIP2-1), found in Zea mays (Maize).